A 531-amino-acid chain; its full sequence is PHD finger protein 21B (531 aa).

Disordered stretches follow at residues 79 to 99 (PDSL…PTFQ), 184 to 222 (SADN…SLSP), 238 to 277 (VQTQ…ENPE), and 295 to 314 (EIQS…PAYS). Residues 265 to 277 (KKEDRPPTQENPE) are compositionally biased toward basic and acidic residues. The segment at 352–399 (DEHCAACKRGANLQPCGTCPGAYHLSCLEPPLKTAPKGVWVCPRCQQK) adopts a PHD-type zinc-finger fold. A coiled-coil region spans residues 423 to 465 (KTVKEEEKQKLLQRGSELQNEHQQLEERDRRLASAVQKCLELK). The tract at residues 507–531 (LLAGPWTKPSVAATHPTVQHPQGHN) is disordered. Residues 522–531 (PTVQHPQGHN) are compositionally biased toward polar residues.

The sequence is that of PHD finger protein 21B (PHF21B) from Homo sapiens (Human).